The chain runs to 66 residues: Large ribosomal subunit protein uL29 (66 aa).

It belongs to the universal ribosomal protein uL29 family.

This Borreliella burgdorferi (strain ZS7) (Borrelia burgdorferi) protein is Large ribosomal subunit protein uL29.